The chain runs to 373 residues: Chorismate synthase (373 aa).

Residues R48 and R54 each coordinate NADP(+). FMN contacts are provided by residues 131–133 (RSS), 243–244 (NA), G288, 303–307 (KPTSS), and R329.

This sequence belongs to the chorismate synthase family. As to quaternary structure, homotetramer. FMNH2 serves as cofactor.

The enzyme catalyses 5-O-(1-carboxyvinyl)-3-phosphoshikimate = chorismate + phosphate. Its pathway is metabolic intermediate biosynthesis; chorismate biosynthesis; chorismate from D-erythrose 4-phosphate and phosphoenolpyruvate: step 7/7. Catalyzes the anti-1,4-elimination of the C-3 phosphate and the C-6 proR hydrogen from 5-enolpyruvylshikimate-3-phosphate (EPSP) to yield chorismate, which is the branch point compound that serves as the starting substrate for the three terminal pathways of aromatic amino acid biosynthesis. This reaction introduces a second double bond into the aromatic ring system. The protein is Chorismate synthase of Beijerinckia indica subsp. indica (strain ATCC 9039 / DSM 1715 / NCIMB 8712).